Consider the following 642-residue polypeptide: Threonine--tRNA ligase (642 aa).

The 61-residue stretch at 1–61 folds into the TGS domain; that stretch reads MPIITLPDGS…EHDASLEIIT (61 aa). The segment at 244-535 is catalytic; the sequence is DHRKIGKQLD…LIEEYAGFFP (292 aa). Residues Cys335, His386, and His512 each coordinate Zn(2+).

This sequence belongs to the class-II aminoacyl-tRNA synthetase family. Homodimer. Requires Zn(2+) as cofactor.

It is found in the cytoplasm. The catalysed reaction is tRNA(Thr) + L-threonine + ATP = L-threonyl-tRNA(Thr) + AMP + diphosphate + H(+). In terms of biological role, catalyzes the attachment of threonine to tRNA(Thr) in a two-step reaction: L-threonine is first activated by ATP to form Thr-AMP and then transferred to the acceptor end of tRNA(Thr). Also edits incorrectly charged L-seryl-tRNA(Thr). This Vibrio cholerae serotype O1 (strain ATCC 39541 / Classical Ogawa 395 / O395) protein is Threonine--tRNA ligase.